The primary structure comprises 199 residues: Early nodulin-like protein 3 (199 aa).

Positions 1–23 (MGLVMRFDLYLMFVMLMGLGFTI) are cleaved as a signal peptide. The Phytocyanin domain maps to 27–128 (YKFYVGGKDG…GQKLAVKVLS (102 aa)). Residues asparagine 57 and asparagine 83 are each glycosylated (N-linked (GlcNAc...) asparagine). Cysteine 82 and cysteine 116 form a disulfide bridge. The segment at 130–180 (VHHSHSPRHTSPSPSPVHQELSSPGPSPGVEPSSDSNSRVPAPGPATAPNS) is disordered. The segment covering 138–165 (HTSPSPSPVHQELSSPGPSPGVEPSSDS) has biased composition (low complexity). Asparagine 179 carries the GPI-anchor amidated asparagine lipid modification. Residues 180 to 199 (SAGLVGPGMVVLVIMISSLF) constitute a propeptide, removed in mature form.

Belongs to the early nodulin-like (ENODL) family. Confined to flowers.

The protein localises to the cell membrane. Functionally, may act as a carbohydrate transporter. In Arabidopsis thaliana (Mouse-ear cress), this protein is Early nodulin-like protein 3.